A 366-amino-acid chain; its full sequence is Ferredoxin--NADP reductase, leaf isozyme 2, chloroplastic (366 aa).

The transit peptide at 1–48 (MAAVNTVSSLPCSKAGAAVAGGAPRPSTCSVFYPPRCWSKRSSGNGVR) directs the protein to the chloroplast. The FAD-binding FR-type domain occupies 87 to 209 (KEPYTGRCLL…TGPVGKEMLM (123 aa)). FAD is bound by residues 145-148 (RLYS), 166-168 (CVK), Tyr-172, and 183-185 (VCS). The NADP(+) site is built by Ser-148 and Lys-168. A disulfide bond links Cys-184 and Cys-189. Ser-185 is modified (phosphoserine). Residue Thr-216 is modified to Phosphothreonine. Residue Thr-224 coordinates FAD. NADP(+) is bound by residues Thr-224, 256 to 257 (VP), 286 to 287 (SR), Lys-296, 325 to 326 (GL), and Glu-364.

Belongs to the ferredoxin--NADP reductase type 1 family. In terms of assembly, heterodimer with LFNR1. Component of high molecular weight thylakoid LFNRs-containing protein complexes containing LIR1, LFNR1, LFNR2, TIC62 and TROL proteins. Interacts directly with LFNR1 and LFNR2; LIR1 increases the affinity of LFNR1 and LFNR2 for TIC62 and subsequent thylakoid relocalization. FAD serves as cofactor. Post-translationally, may form interchain disulfide bonds with LIR1.

Its subcellular location is the plastid. The protein localises to the chloroplast stroma. It localises to the chloroplast thylakoid membrane. The catalysed reaction is 2 reduced [2Fe-2S]-[ferredoxin] + NADP(+) + H(+) = 2 oxidized [2Fe-2S]-[ferredoxin] + NADPH. It functions in the pathway energy metabolism; photosynthesis. In terms of biological role, plays a key role in regulating the relative amounts of cyclic and non-cyclic electron flow to meet the demands of the plant for ATP and reducing power. The sequence is that of Ferredoxin--NADP reductase, leaf isozyme 2, chloroplastic from Oryza sativa subsp. indica (Rice).